Reading from the N-terminus, the 196-residue chain is Probable malonic semialdehyde reductase RutE (196 aa).

The protein belongs to the nitroreductase family. HadB/RutE subfamily. The cofactor is FMN.

The catalysed reaction is 3-hydroxypropanoate + NADP(+) = 3-oxopropanoate + NADPH + H(+). Its function is as follows. May reduce toxic product malonic semialdehyde to 3-hydroxypropionic acid, which is excreted. This chain is Probable malonic semialdehyde reductase RutE, found in Escherichia coli (strain SMS-3-5 / SECEC).